The chain runs to 941 residues: Bifunctional glutamine synthetase adenylyltransferase/adenylyl-removing enzyme (941 aa).

The segment at 1–431 (MSSAPPFAAA…TFRNAFRLAG (431 aa)) is adenylyl removase. Positions 447–941 (NGHAMRPHAG…DGTIAQAEVK (495 aa)) are adenylyl transferase.

This sequence belongs to the GlnE family. The cofactor is Mg(2+).

It catalyses the reaction [glutamine synthetase]-O(4)-(5'-adenylyl)-L-tyrosine + phosphate = [glutamine synthetase]-L-tyrosine + ADP. The catalysed reaction is [glutamine synthetase]-L-tyrosine + ATP = [glutamine synthetase]-O(4)-(5'-adenylyl)-L-tyrosine + diphosphate. Functionally, involved in the regulation of glutamine synthetase GlnA, a key enzyme in the process to assimilate ammonia. When cellular nitrogen levels are high, the C-terminal adenylyl transferase (AT) inactivates GlnA by covalent transfer of an adenylyl group from ATP to specific tyrosine residue of GlnA, thus reducing its activity. Conversely, when nitrogen levels are low, the N-terminal adenylyl removase (AR) activates GlnA by removing the adenylyl group by phosphorolysis, increasing its activity. The regulatory region of GlnE binds the signal transduction protein PII (GlnB) which indicates the nitrogen status of the cell. The sequence is that of Bifunctional glutamine synthetase adenylyltransferase/adenylyl-removing enzyme from Bordetella pertussis (strain Tohama I / ATCC BAA-589 / NCTC 13251).